We begin with the raw amino-acid sequence, 184 residues long: Dirigent protein 14 (184 aa).

The N-terminal stretch at Met1–Ser20 is a signal peptide. Cys36 and Cys182 are joined by a disulfide. N-linked (GlcNAc...) asparagine glycans are attached at residues Asn55 and Asn119.

It belongs to the plant dirigent protein family. Homodimer.

It is found in the secreted. It localises to the extracellular space. The protein resides in the apoplast. Its function is as follows. Dirigent proteins impart stereoselectivity on the phenoxy radical-coupling reaction, yielding optically active lignans from two molecules of coniferyl alcohol in the biosynthesis of lignans, flavonolignans, and alkaloids and thus plays a central role in plant secondary metabolism. In Arabidopsis thaliana (Mouse-ear cress), this protein is Dirigent protein 14 (DIR14).